The sequence spans 229 residues: Prolactin (229 aa).

The first 30 residues, 1–30 (MDSKGSAQKGSRLLLLLVVSNLLLCQGVVS), serve as a signal peptide directing secretion. C34 and C41 are joined by a disulfide. S56 is modified (phosphoserine). N-linked (GlcNAc...) asparagine; partial glycosylation is present at N61. Phosphoserine is present on residues S64 and S120. 2 disulfide bridges follow: C88–C204 and C221–C229.

It belongs to the somatotropin/prolactin family. As to quaternary structure, interacts with PRLR.

The protein localises to the secreted. Prolactin acts primarily on the mammary gland by promoting lactation, mammogenesis, mitogenesis and osmoregulation. The chain is Prolactin (PRL) from Ovis aries (Sheep).